Consider the following 478-residue polypeptide: Zinc finger C3HC-type protein 1-like (478 aa).

A C3HC-type zinc finger spans residues 93–147 (CAKYGWSNIECDMLKCSSCNAYLCASLQPVLDFSKYKQRCVELQEALRKAHEKFC). Residues 285–389 (LSAPNTPVSP…SSSSDTSPRG (105 aa)) are disordered. A compositionally biased stretch (polar residues) spans 351–363 (SMGQGESSGLSNE). Low complexity predominate over residues 377–388 (LCSSSSSDTSPR).

Phosphorylated. May also be weakly phosphorylated on Tyr residues.

It is found in the nucleus. The protein localises to the nucleus envelope. Its function is as follows. Required for proper positioning of a substantial amount of TPR at the nuclear basket (NB) through interaction with TPR. The sequence is that of Zinc finger C3HC-type protein 1-like (zc3hc1) from Xenopus tropicalis (Western clawed frog).